We begin with the raw amino-acid sequence, 104 residues long: Pyrimidine/purine nucleoside phosphorylase (104 aa).

The protein belongs to the nucleoside phosphorylase PpnP family.

It catalyses the reaction a purine D-ribonucleoside + phosphate = a purine nucleobase + alpha-D-ribose 1-phosphate. The enzyme catalyses adenosine + phosphate = alpha-D-ribose 1-phosphate + adenine. It carries out the reaction cytidine + phosphate = cytosine + alpha-D-ribose 1-phosphate. The catalysed reaction is guanosine + phosphate = alpha-D-ribose 1-phosphate + guanine. It catalyses the reaction inosine + phosphate = alpha-D-ribose 1-phosphate + hypoxanthine. The enzyme catalyses thymidine + phosphate = 2-deoxy-alpha-D-ribose 1-phosphate + thymine. It carries out the reaction uridine + phosphate = alpha-D-ribose 1-phosphate + uracil. The catalysed reaction is xanthosine + phosphate = alpha-D-ribose 1-phosphate + xanthine. Functionally, catalyzes the phosphorolysis of diverse nucleosides, yielding D-ribose 1-phosphate and the respective free bases. Can use uridine, adenosine, guanosine, cytidine, thymidine, inosine and xanthosine as substrates. Also catalyzes the reverse reactions. This chain is Pyrimidine/purine nucleoside phosphorylase, found in Leptothrix cholodnii (strain ATCC 51168 / LMG 8142 / SP-6) (Leptothrix discophora (strain SP-6)).